The chain runs to 238 residues: tRNA (guanine-N(7)-)-methyltransferase (238 aa).

Residues Glu-70, Asp-95, Asp-122, and Asp-145 each contribute to the S-adenosyl-L-methionine site. Residue Asp-145 is part of the active site. Substrate is bound by residues Lys-149, Asp-181, and 216 to 219; that span reads TKFE.

This sequence belongs to the class I-like SAM-binding methyltransferase superfamily. TrmB family.

It catalyses the reaction guanosine(46) in tRNA + S-adenosyl-L-methionine = N(7)-methylguanosine(46) in tRNA + S-adenosyl-L-homocysteine. It participates in tRNA modification; N(7)-methylguanine-tRNA biosynthesis. Its function is as follows. Catalyzes the formation of N(7)-methylguanine at position 46 (m7G46) in tRNA. This Neisseria meningitidis serogroup A / serotype 4A (strain DSM 15465 / Z2491) protein is tRNA (guanine-N(7)-)-methyltransferase.